The following is a 1358-amino-acid chain: DNA-directed RNA polymerase subunit beta (1358 aa).

It belongs to the RNA polymerase beta chain family. In terms of assembly, the RNAP catalytic core consists of 2 alpha, 1 beta, 1 beta' and 1 omega subunit. When a sigma factor is associated with the core the holoenzyme is formed, which can initiate transcription.

The catalysed reaction is RNA(n) + a ribonucleoside 5'-triphosphate = RNA(n+1) + diphosphate. Its function is as follows. DNA-dependent RNA polymerase catalyzes the transcription of DNA into RNA using the four ribonucleoside triphosphates as substrates. The chain is DNA-directed RNA polymerase subunit beta from Francisella tularensis subsp. tularensis (strain FSC 198).